Consider the following 366-residue polypeptide: Chorismate synthase (366 aa).

Residues Arg-48 and Arg-54 each contribute to the NADP(+) site. FMN is bound by residues 125–127 (RSS), 238–239 (NA), Gly-278, 293–297 (KPTSS), and Arg-319.

This sequence belongs to the chorismate synthase family. As to quaternary structure, homotetramer. FMNH2 serves as cofactor.

It carries out the reaction 5-O-(1-carboxyvinyl)-3-phosphoshikimate = chorismate + phosphate. It participates in metabolic intermediate biosynthesis; chorismate biosynthesis; chorismate from D-erythrose 4-phosphate and phosphoenolpyruvate: step 7/7. Catalyzes the anti-1,4-elimination of the C-3 phosphate and the C-6 proR hydrogen from 5-enolpyruvylshikimate-3-phosphate (EPSP) to yield chorismate, which is the branch point compound that serves as the starting substrate for the three terminal pathways of aromatic amino acid biosynthesis. This reaction introduces a second double bond into the aromatic ring system. This is Chorismate synthase from Dechloromonas aromatica (strain RCB).